The sequence spans 245 residues: MPTFLHHALLACGFLTRLVPARVATADDMAAAVRWFPLAGLVVGGACWLPFALGLAASHPAIQAWLYVLINLWVTRGLHWDGVADLADAWGSSATGERFWDILKDSRIGAFGVMGLLLGFGGQYIGAHEIFISGRLGVLIAAPIVGRGACVILAALVPPGSRSTLGRLTCAGADRIAIGVAATCGILVLLLTTPVMTTVTTIAICGAIVTALAHLARREGGINGDFMGACIAGCEGAVLLAASMG.

6 helical membrane passes run W35 to L55, I108 to H128, G137 to V157, I176 to M196, T197 to R217, and I222 to A242.

The protein belongs to the CobS family. Mg(2+) serves as cofactor.

The protein localises to the cell inner membrane. The catalysed reaction is alpha-ribazole + adenosylcob(III)inamide-GDP = adenosylcob(III)alamin + GMP + H(+). It carries out the reaction alpha-ribazole 5'-phosphate + adenosylcob(III)inamide-GDP = adenosylcob(III)alamin 5'-phosphate + GMP + H(+). The protein operates within cofactor biosynthesis; adenosylcobalamin biosynthesis; adenosylcobalamin from cob(II)yrinate a,c-diamide: step 7/7. Its function is as follows. Joins adenosylcobinamide-GDP and alpha-ribazole to generate adenosylcobalamin (Ado-cobalamin). Also synthesizes adenosylcobalamin 5'-phosphate from adenosylcobinamide-GDP and alpha-ribazole 5'-phosphate. In Nitratidesulfovibrio vulgaris (strain DP4) (Desulfovibrio vulgaris), this protein is Adenosylcobinamide-GDP ribazoletransferase.